Here is a 484-residue protein sequence, read N- to C-terminus: tRNA sulfurtransferase (484 aa).

Positions 63-167 constitute a THUMP domain; that stretch reads EAFAERLACI…KESLYLVSKR (105 aa). Residues 185–186, Lys-267, Gly-289, and Gln-298 contribute to the ATP site; that span reads LI. Cys-346 and Cys-458 form a disulfide bridge. The Rhodanese domain occupies 406-484; that stretch reads INSGEVIIDV…GYDNVKVYRP (79 aa). Cys-458 functions as the Cysteine persulfide intermediate in the catalytic mechanism.

The protein belongs to the ThiI family.

Its subcellular location is the cytoplasm. It carries out the reaction [ThiI sulfur-carrier protein]-S-sulfanyl-L-cysteine + a uridine in tRNA + 2 reduced [2Fe-2S]-[ferredoxin] + ATP + H(+) = [ThiI sulfur-carrier protein]-L-cysteine + a 4-thiouridine in tRNA + 2 oxidized [2Fe-2S]-[ferredoxin] + AMP + diphosphate. It catalyses the reaction [ThiS sulfur-carrier protein]-C-terminal Gly-Gly-AMP + S-sulfanyl-L-cysteinyl-[cysteine desulfurase] + AH2 = [ThiS sulfur-carrier protein]-C-terminal-Gly-aminoethanethioate + L-cysteinyl-[cysteine desulfurase] + A + AMP + 2 H(+). Its pathway is cofactor biosynthesis; thiamine diphosphate biosynthesis. Its function is as follows. Catalyzes the ATP-dependent transfer of a sulfur to tRNA to produce 4-thiouridine in position 8 of tRNAs, which functions as a near-UV photosensor. Also catalyzes the transfer of sulfur to the sulfur carrier protein ThiS, forming ThiS-thiocarboxylate. This is a step in the synthesis of thiazole, in the thiamine biosynthesis pathway. The sulfur is donated as persulfide by IscS. This is tRNA sulfurtransferase from Shewanella woodyi (strain ATCC 51908 / MS32).